Consider the following 553-residue polypeptide: Formate--tetrahydrofolate ligase 2 (553 aa).

63-70 (TSAGEGKS) is a binding site for ATP.

It belongs to the formate--tetrahydrofolate ligase family.

It carries out the reaction (6S)-5,6,7,8-tetrahydrofolate + formate + ATP = (6R)-10-formyltetrahydrofolate + ADP + phosphate. The protein operates within one-carbon metabolism; tetrahydrofolate interconversion. The polypeptide is Formate--tetrahydrofolate ligase 2 (Lactobacillus acidophilus (strain ATCC 700396 / NCK56 / N2 / NCFM)).